The chain runs to 37 residues: Large ribosomal subunit protein bL36c (37 aa).

This sequence belongs to the bacterial ribosomal protein bL36 family.

It localises to the plastid. Its subcellular location is the chloroplast. This is Large ribosomal subunit protein bL36c from Lepidium virginicum (Virginia pepperweed).